A 435-amino-acid polypeptide reads, in one-letter code: AP-2 complex subunit mu (435 aa).

One can recognise an MHD domain in the interval 170 to 434 (RNELFLDVLE…IGRSGIYETR (265 aa)). 3 residues coordinate a 1,2-diacyl-sn-glycero-3-phospho-(1D-myo-inositol-3,4,5-trisphosphate): K341, K345, and K354.

The protein belongs to the adaptor complexes medium subunit family. In terms of assembly, adaptor protein complex 2 (AP-2) is a heterotetramer composed of two large adaptins (alpha-type subunit and beta-type subunit), a medium adaptin (mu-type subunit) and a small adaptin (sigma-type subunit).

Its subcellular location is the cell membrane. It localises to the membrane. The protein resides in the coated pit. In terms of biological role, component of the adaptor complexes which link clathrin to receptors in coated vesicles. Clathrin-associated protein complexes are believed to interact with the cytoplasmic tails of membrane proteins, leading to their selection and concentration. AP50 is a subunit of the plasma membrane adaptor. The complex binds polyphosphoinositide-containing lipids. This is AP-2 complex subunit mu (ap2m1) from Xenopus tropicalis (Western clawed frog).